The sequence spans 504 residues: 2,3-bisphosphoglycerate-independent phosphoglycerate mutase (504 aa).

Residues aspartate 11 and serine 61 each contribute to the Mn(2+) site. Serine 61 serves as the catalytic Phosphoserine intermediate. Substrate is bound by residues histidine 122, 152-153 (RD), arginine 183, arginine 189, 255-258 (RNDR), and lysine 329. Residues aspartate 396, histidine 400, aspartate 437, histidine 438, and histidine 455 each coordinate Mn(2+).

The protein belongs to the BPG-independent phosphoglycerate mutase family. As to quaternary structure, monomer. It depends on Mn(2+) as a cofactor.

The enzyme catalyses (2R)-2-phosphoglycerate = (2R)-3-phosphoglycerate. It functions in the pathway carbohydrate degradation; glycolysis; pyruvate from D-glyceraldehyde 3-phosphate: step 3/5. Its function is as follows. Catalyzes the interconversion of 2-phosphoglycerate and 3-phosphoglycerate. The sequence is that of 2,3-bisphosphoglycerate-independent phosphoglycerate mutase from Bacteroides fragilis (strain ATCC 25285 / DSM 2151 / CCUG 4856 / JCM 11019 / LMG 10263 / NCTC 9343 / Onslow / VPI 2553 / EN-2).